The chain runs to 212 residues: Probable GTP-binding protein EngB (212 aa).

An EngB-type G domain is found at 23-197 (TGIEVAFAGR…ERILDGWFGL (175 aa)). GTP is bound by residues 31–38 (GRSNAGKS), 58–62 (GRTQL), 76–79 (DLPG), 143–146 (TKAD), and 176–178 (FSS). The Mg(2+) site is built by Ser38 and Thr60.

It belongs to the TRAFAC class TrmE-Era-EngA-EngB-Septin-like GTPase superfamily. EngB GTPase family. It depends on Mg(2+) as a cofactor.

In terms of biological role, necessary for normal cell division and for the maintenance of normal septation. This is Probable GTP-binding protein EngB from Alteromonas mediterranea (strain DSM 17117 / CIP 110805 / LMG 28347 / Deep ecotype).